A 423-amino-acid polypeptide reads, in one-letter code: L-cysteine:1D-myo-inositol 2-amino-2-deoxy-alpha-D-glucopyranoside ligase (423 aa).

Residue Cys45 participates in Zn(2+) binding. Residues 45–48 (CGIT), Thr60, and 83–85 (NVT) contribute to the L-cysteinyl-5'-AMP site. Residues 47–57 (ITPYDATHIGH) carry the 'HIGH' region motif. The 'ERGGDP' region signature appears at 197-202 (DRGGDP). An L-cysteinyl-5'-AMP-binding site is contributed by Trp238. Cys242 is a Zn(2+) binding site. 260–262 (GSD) contributes to the L-cysteinyl-5'-AMP binding site. His267 serves as a coordination point for Zn(2+). Ile294 lines the L-cysteinyl-5'-AMP pocket. Residues 300–304 (KMSKS) carry the 'KMSKS' region motif.

Belongs to the class-I aminoacyl-tRNA synthetase family. MshC subfamily. As to quaternary structure, monomer. Zn(2+) is required as a cofactor.

The enzyme catalyses 1D-myo-inositol 2-amino-2-deoxy-alpha-D-glucopyranoside + L-cysteine + ATP = 1D-myo-inositol 2-(L-cysteinylamino)-2-deoxy-alpha-D-glucopyranoside + AMP + diphosphate + H(+). Catalyzes the ATP-dependent condensation of GlcN-Ins and L-cysteine to form L-Cys-GlcN-Ins. This Jonesia denitrificans (strain ATCC 14870 / DSM 20603 / BCRC 15368 / CIP 55.134 / JCM 11481 / NBRC 15587 / NCTC 10816 / Prevot 55134) (Listeria denitrificans) protein is L-cysteine:1D-myo-inositol 2-amino-2-deoxy-alpha-D-glucopyranoside ligase.